The following is a 391-amino-acid chain: UDP-galactose transporter homolog 1 (391 aa).

The next 5 membrane-spanning stretches (helical) occupy residues leucine 3–leucine 23, leucine 52–valine 72, tyrosine 126–isoleucine 147, tyrosine 178–proline 198, and alanine 207–glycine 227. Asparagine 230 carries an N-linked (GlcNAc...) asparagine glycan. The next 4 membrane-spanning stretches (helical) occupy residues methionine 250–isoleucine 270, aspartate 298–glutamate 318, leucine 323–valine 343, and glutamate 347–alanine 367.

The protein belongs to the nucleotide-sugar transporter family. SLC35B subfamily.

It localises to the endoplasmic reticulum membrane. Its function is as follows. May be involved in specific transport of UDP-Gal from the cytosol to the Golgi lumen. Involved in the maintenance of optimal conditions for the folding of secretory pathway proteins in the endoplasmic reticulum. This Mycosarcoma maydis (Corn smut fungus) protein is UDP-galactose transporter homolog 1 (HUT1).